The chain runs to 901 residues: Aconitate hydratase A (901 aa).

[4Fe-4S] cluster-binding residues include C443, C509, and C512.

Belongs to the aconitase/IPM isomerase family. In terms of assembly, monomer. The cofactor is [4Fe-4S] cluster.

It catalyses the reaction citrate = D-threo-isocitrate. The enzyme catalyses (2S,3R)-3-hydroxybutane-1,2,3-tricarboxylate = 2-methyl-cis-aconitate + H2O. It functions in the pathway carbohydrate metabolism; tricarboxylic acid cycle; isocitrate from oxaloacetate: step 2/2. It participates in organic acid metabolism; propanoate degradation. In terms of biological role, involved in the catabolism of short chain fatty acids (SCFA) via the tricarboxylic acid (TCA)(acetyl degradation route) and probably the 2-methylcitrate cycle I (propionate degradation route). Catalyzes the reversible isomerization of citrate to isocitrate via cis-aconitate. Could catalyze the hydration of 2-methyl-cis-aconitate to yield (2R,3S)-2-methylisocitrate. The apo form of AcnA functions as a RNA-binding regulatory protein. This Staphylococcus epidermidis (strain ATCC 35984 / DSM 28319 / BCRC 17069 / CCUG 31568 / BM 3577 / RP62A) protein is Aconitate hydratase A (acnA).